A 216-amino-acid polypeptide reads, in one-letter code: GTP cyclohydrolase 1 (216 aa).

Residues cysteine 109, histidine 112, and cysteine 180 each contribute to the Zn(2+) site.

Belongs to the GTP cyclohydrolase I family. In terms of assembly, homomer.

It carries out the reaction GTP + H2O = 7,8-dihydroneopterin 3'-triphosphate + formate + H(+). The protein operates within cofactor biosynthesis; 7,8-dihydroneopterin triphosphate biosynthesis; 7,8-dihydroneopterin triphosphate from GTP: step 1/1. This chain is GTP cyclohydrolase 1, found in Tolumonas auensis (strain DSM 9187 / NBRC 110442 / TA 4).